The primary structure comprises 423 residues: Histidine--tRNA ligase (423 aa).

This sequence belongs to the class-II aminoacyl-tRNA synthetase family. In terms of assembly, homodimer.

The protein localises to the cytoplasm. The catalysed reaction is tRNA(His) + L-histidine + ATP = L-histidyl-tRNA(His) + AMP + diphosphate + H(+). In Laribacter hongkongensis (strain HLHK9), this protein is Histidine--tRNA ligase.